Reading from the N-terminus, the 120-residue chain is ATP-dependent Clp protease adapter protein ClpS (120 aa).

A disordered region spans residues 1-27; that stretch reads MHAPSEIRLTFNQDRPQSNEDDGSGLA.

It belongs to the ClpS family. As to quaternary structure, binds to the N-terminal domain of the chaperone ClpA.

Its function is as follows. Involved in the modulation of the specificity of the ClpAP-mediated ATP-dependent protein degradation. This is ATP-dependent Clp protease adapter protein ClpS from Pseudomonas putida (strain GB-1).